A 306-amino-acid chain; its full sequence is Recombination-associated protein RdgC (306 aa).

It belongs to the RdgC family.

Its subcellular location is the cytoplasm. The protein localises to the nucleoid. In terms of biological role, may be involved in recombination. This chain is Recombination-associated protein RdgC, found in Pseudomonas fluorescens (strain Pf0-1).